Here is a 235-residue protein sequence, read N- to C-terminus: tRNA (guanine-N(1)-)-methyltransferase (235 aa).

S-adenosyl-L-methionine-binding positions include glycine 112 and 132–137 (IGDYVI).

Belongs to the RNA methyltransferase TrmD family. As to quaternary structure, homodimer.

The protein localises to the cytoplasm. The enzyme catalyses guanosine(37) in tRNA + S-adenosyl-L-methionine = N(1)-methylguanosine(37) in tRNA + S-adenosyl-L-homocysteine + H(+). Specifically methylates guanosine-37 in various tRNAs. This Anaplasma marginale (strain Florida) protein is tRNA (guanine-N(1)-)-methyltransferase.